The primary structure comprises 86 residues: Large ribosomal subunit protein uL23 (86 aa).

It belongs to the universal ribosomal protein uL23 family. As to quaternary structure, part of the 50S ribosomal subunit. Contacts protein L29.

Binds to 23S rRNA. One of the proteins that surrounds the polypeptide exit tunnel on the outside of the ribosome. In Methanococcus maripaludis (strain C7 / ATCC BAA-1331), this protein is Large ribosomal subunit protein uL23.